Consider the following 858-residue polypeptide: Magnesium transporter ALR2 (858 aa).

The segment covering 1–14 (MSSLSTSFDSSSDL) has biased composition (low complexity). Disordered stretches follow at residues 1–81 (MSSL…NGGY), 318–337 (TYNHTDQDTGFTNSASTSGS), and 365–396 (NNESVREDDKPDLHPDVTFGRNKIEGEKEGND). Residues 1-741 (MSSLSTSFDS…NNKVTEMLGK (741 aa)) lie on the Cytoplasmic side of the membrane. A compositionally biased stretch (basic and acidic residues) spans 46–61 (PIRHEALALKVDETKD). Low complexity predominate over residues 67–81 (SSSNGENSGVENGGY). Basic and acidic residues-rich tracts occupy residues 367 to 379 (ESVREDDKPDLHP) and 386 to 395 (NKIEGEKEGN). A helical transmembrane segment spans residues 742-762 (VTMLGTMLVPLNVITGLFGMN). Over 763 to 771 (VKVPGRNGS) the chain is Extracellular. Residues 772–792 (IAWWYGILGVLLLLAVISWFL) form a helical membrane-spanning segment. At 793 to 858 (ASYWIKKIDP…SLPSRYSRYN (66 aa)) the chain is on the cytoplasmic side.

It belongs to the CorA metal ion transporter (MIT) (TC 1.A.35) family.

It localises to the cell membrane. In terms of biological role, plasma membrane magnesium transporter. This chain is Magnesium transporter ALR2 (ALR2), found in Saccharomyces cerevisiae (strain ATCC 204508 / S288c) (Baker's yeast).